An 81-amino-acid polypeptide reads, in one-letter code: CLAVATA3/ESR (CLE)-related protein 5 (81 aa).

The signal sequence occupies residues methionine 1–alanine 26. Residues proline 73 and proline 76 each carry the hydroxyproline modification. Proline 76 carries an O-linked (Ara...) hydroxyproline glycan.

Belongs to the CLV3/ESR signal peptide family. Post-translationally, the O-glycosylation (arabinosylation) of the hydroxyproline Pro-76 enhances binding affinity of the CLE5p peptide for its receptor. As to expression, mostly expressed in roots, and, to a lower extent, in seedlings, stems, apex, flowers and siliques.

The protein localises to the secreted. It localises to the extracellular space. In terms of biological role, extracellular signal peptide that regulates cell fate. The polypeptide is CLAVATA3/ESR (CLE)-related protein 5 (Arabidopsis thaliana (Mouse-ear cress)).